The sequence spans 168 residues: Photosystem I assembly protein Ycf3 (168 aa).

TPR repeat units follow at residues 35-68 (AFTYYRDGMSAQSDGNYAEALQNYYEATRLEIDP), 72-105 (SYILYNIGLIHTSNGEHTKALEYYFRALERNPFL), and 120-153 (GEQAIRQGDSEIAEAWSDQAAEYWKQAIALTPGN).

It belongs to the Ycf3 family.

The protein resides in the plastid. It is found in the chloroplast thylakoid membrane. Essential for the assembly of the photosystem I (PSI) complex. May act as a chaperone-like factor to guide the assembly of the PSI subunits. The protein is Photosystem I assembly protein Ycf3 of Chloranthus spicatus (Chulantree).